Here is a 416-residue protein sequence, read N- to C-terminus: Creatine kinase U-type, mitochondrial (416 aa).

Residues methionine 1–alanine 39 constitute a mitochondrion transit peptide. The interval alanine 40–alanine 64 is cardiolipin-binding. In terms of domain architecture, Phosphagen kinase N-terminal spans arginine 45–asparagine 131. At serine 151 the chain carries Phosphoserine. The Phosphagen kinase C-terminal domain occupies tyrosine 158–leucine 400. Position 161 to 165 (serine 161 to arginine 165) interacts with ATP. Serine 196 bears the Phosphoserine mark. Threonine 213 carries the phosphothreonine modification. Histidine 224 serves as a coordination point for ATP. Position 232 is a phosphoserine (serine 232). Residues arginine 269, arginine 325, and arginine 353–valine 358 each bind ATP. Residue threonine 355 is modified to Phosphothreonine. Serine 365 bears the Phosphoserine mark. Aspartate 368 serves as a coordination point for ATP.

Belongs to the ATP:guanido phosphotransferase family. Exists as an octamer composed of four MTCK homodimers.

It localises to the mitochondrion inner membrane. The catalysed reaction is creatine + ATP = N-phosphocreatine + ADP + H(+). Functionally, reversibly catalyzes the transfer of phosphate between ATP and various phosphogens (e.g. creatine phosphate). Creatine kinase isoenzymes play a central role in energy transduction in tissues with large, fluctuating energy demands, such as skeletal muscle, heart, brain and spermatozoa. In Bos taurus (Bovine), this protein is Creatine kinase U-type, mitochondrial (CKMT1).